Reading from the N-terminus, the 134-residue chain is Glycine cleavage system H protein (134 aa).

In terms of domain architecture, Lipoyl-binding spans 24–106 (TVRVGITDYA…YGAGWLLDIQ (83 aa)). Position 65 is an N6-lipoyllysine (K65).

The protein belongs to the GcvH family. In terms of assembly, the glycine cleavage system is composed of four proteins: P, T, L and H. Requires (R)-lipoate as cofactor.

Its function is as follows. The glycine cleavage system catalyzes the degradation of glycine. The H protein shuttles the methylamine group of glycine from the P protein to the T protein. The polypeptide is Glycine cleavage system H protein (Mycobacterium bovis (strain ATCC BAA-935 / AF2122/97)).